We begin with the raw amino-acid sequence, 61 residues long: Alpha-conotoxin-like Lp1.6a (61 aa).

Residues 1-21 (MGMRMMFIIFLFVVLATTVVS) form the signal peptide. The propeptide occupies 22-44 (FTSGRASDGRNAPANNKVSDLIR). Position 45 is a pyrrolidone carboxylic acid (Gln45). 2 disulfides stabilise this stretch: Cys47–Cys53 and Cys48–Cys60. Cysteine amide is present on Cys60.

This sequence belongs to the conotoxin A superfamily. In terms of tissue distribution, expressed by the venom duct.

It localises to the secreted. Functionally, alpha-conotoxins act on postsynaptic membranes, they bind to the nicotinic acetylcholine receptors (nAChR) and thus inhibit them. This Conus leopardus (Leopard cone) protein is Alpha-conotoxin-like Lp1.6a.